Reading from the N-terminus, the 142-residue chain is Small heat shock protein IbpB (142 aa).

One can recognise a sHSP domain in the interval 26–137 (AGESQSFPPY…AAQRIAISER (112 aa)).

The protein belongs to the small heat shock protein (HSP20) family. As to quaternary structure, homodimer. Forms homomultimers of about 100-150 subunits at optimal growth temperatures. Conformation changes to oligomers at high temperatures or high ionic concentrations. The decrease in size of the multimers is accompanied by an increase in chaperone activity.

The protein resides in the cytoplasm. Associates with aggregated proteins, together with IbpA, to stabilize and protect them from irreversible denaturation and extensive proteolysis during heat shock and oxidative stress. Aggregated proteins bound to the IbpAB complex are more efficiently refolded and reactivated by the ATP-dependent chaperone systems ClpB and DnaK/DnaJ/GrpE. Its activity is ATP-independent. The sequence is that of Small heat shock protein IbpB from Shigella flexneri serotype 5b (strain 8401).